The primary structure comprises 271 residues: Catechol O-methyltransferase (271 aa).

Residues 1–6 (MPEAPP) lie on the Cytoplasmic side of the membrane. Residues 7–26 (LLLAAVLLGLVLLVVLLLLL) traverse the membrane as a helical; Signal-anchor for type II membrane protein segment. Topologically, residues 27–271 (RHWGWGLCLI…YKGPGSEAGP (245 aa)) are extracellular. Residues Val92, Glu114, Ser122, Glu140, Ile141, 167–170 (GASQ), Ser169, and Asp191 contribute to the S-adenosyl-L-methionine site. Asp191 is a binding site for Mg(2+). Lys194 contributes to the substrate binding site. The Mg(2+) site is built by Asp219 and Asn220. The substrate site is built by Asn220 and Glu249. Ser267 is modified (phosphoserine).

The protein belongs to the class I-like SAM-binding methyltransferase superfamily. Cation-dependent O-methyltransferase family. The cofactor is Mg(2+). Post-translationally, the N-terminus is blocked. In terms of tissue distribution, brain, liver, placenta, lymphocytes and erythrocytes.

The protein resides in the cytoplasm. Its subcellular location is the cell membrane. It catalyses the reaction a catechol + S-adenosyl-L-methionine = a guaiacol + S-adenosyl-L-homocysteine + H(+). The catalysed reaction is 2-hydroxyestrone + S-adenosyl-L-methionine = 2-hydroxy-3-methoxy-estrone + S-adenosyl-L-homocysteine + H(+). The enzyme catalyses 4-hydroxyestrone + S-adenosyl-L-methionine = 4-methoxyestrone + S-adenosyl-L-homocysteine + H(+). It carries out the reaction 2-hydroxyestrone + S-adenosyl-L-methionine = 2-methoxyestrone + S-adenosyl-L-homocysteine + H(+). It catalyses the reaction 4-hydroxy-17beta-estradiol + S-adenosyl-L-methionine = 4-methoxy-17beta-estradiol + S-adenosyl-L-homocysteine + H(+). The catalysed reaction is 2-hydroxy-17beta-estradiol + S-adenosyl-L-methionine = 2-hydroxy-3-methoxy-17beta-estradiol + S-adenosyl-L-homocysteine + H(+). The enzyme catalyses 2-hydroxy-17beta-estradiol + S-adenosyl-L-methionine = 2-methoxy-17beta-estradiol + S-adenosyl-L-homocysteine + H(+). Its function is as follows. Catalyzes the O-methylation, and thereby the inactivation, of catecholamine neurotransmitters and catechol hormones. Also shortens the biological half-lives of certain neuroactive drugs, like L-DOPA, alpha-methyl DOPA and isoproterenol. The protein is Catechol O-methyltransferase of Homo sapiens (Human).